The chain runs to 172 residues: MKIYKDIITGDEMFADTYKMKLVDEVIYEVYGKLITRQGDDIKLEGANASAEEADEGTDITSESGVDVVLNHRLQECFAFGDKKSYTLYLKDYMKKVLAKLEEKSPDQVDVFKTNMNKAMKDILGRFKELQFFTGESMDCDGMVALVEYREINGDSVPVLMFFKHGLDEEKC.

A TCTP domain is found at 1–172; sequence MKIYKDIITG…FKHGLDEEKC (172 aa).

The protein belongs to the TCTP family.

The protein resides in the cytoplasm. In terms of biological role, involved in calcium binding and microtubule stabilization. The polypeptide is Translationally-controlled tumor protein homolog (Drosophila yakuba (Fruit fly)).